The chain runs to 464 residues: GTPase Der (464 aa).

2 consecutive EngA-type G domains span residues 3-166 and 178-351; these read PVIA…PEVE and IRIA…DSAF. GTP contacts are provided by residues 9–16, 56–60, 118–121, 184–191, 231–235, and 296–299; these read GRPNVGKS, DTGGL, NKTD, GRPNAGKS, DTAGV, and NKWD. The KH-like domain occupies 352–436; the sequence is IKVSTNHLTK…PIRLEFKTGE (85 aa).

Belongs to the TRAFAC class TrmE-Era-EngA-EngB-Septin-like GTPase superfamily. EngA (Der) GTPase family. Associates with the 50S ribosomal subunit.

GTPase that plays an essential role in the late steps of ribosome biogenesis. The chain is GTPase Der from Thioalkalivibrio sulfidiphilus (strain HL-EbGR7).